The primary structure comprises 567 residues: Urease subunit alpha (567 aa).

Residues His-134, His-136, and Lys-217 each coordinate Ni(2+). Lys-217 bears the N6-carboxylysine mark. Substrate is bound at residue His-219. The Ni(2+) site is built by His-246 and His-272. His-320 acts as the Proton donor in catalysis. A Ni(2+)-binding site is contributed by Asp-360.

This sequence belongs to the metallo-dependent hydrolases superfamily. Urease alpha subunit family. Heterotrimer of UreA (gamma), UreB (beta) and UreC (alpha) subunits. Three heterotrimers associate to form the active enzyme. The cofactor is Ni cation. Post-translationally, carboxylation allows a single lysine to coordinate two nickel ions.

The protein localises to the cytoplasm. The catalysed reaction is urea + 2 H2O + H(+) = hydrogencarbonate + 2 NH4(+). Its pathway is nitrogen metabolism; urea degradation; CO(2) and NH(3) from urea (urease route): step 1/1. The polypeptide is Urease subunit alpha (Pseudomonas putida (strain GB-1)).